A 197-amino-acid chain; its full sequence is Phosphoheptose isomerase (197 aa).

Residues 37–197 (MLQCLMNDGK…CIDSVLLEGM (161 aa)) form the SIS domain. Position 52-54 (52-54 (NGG)) interacts with substrate. Zn(2+)-binding residues include H61 and E65. Residues E65, 94–95 (ND), 120–122 (STS), S125, and Q175 contribute to the substrate site. Zn(2+) contacts are provided by Q175 and H183.

The protein belongs to the SIS family. GmhA subfamily. In terms of assembly, homotetramer. Requires Zn(2+) as cofactor.

It localises to the cytoplasm. It catalyses the reaction 2 D-sedoheptulose 7-phosphate = D-glycero-alpha-D-manno-heptose 7-phosphate + D-glycero-beta-D-manno-heptose 7-phosphate. The protein operates within carbohydrate biosynthesis; D-glycero-D-manno-heptose 7-phosphate biosynthesis; D-glycero-alpha-D-manno-heptose 7-phosphate and D-glycero-beta-D-manno-heptose 7-phosphate from sedoheptulose 7-phosphate: step 1/1. Its function is as follows. Catalyzes the isomerization of sedoheptulose 7-phosphate in D-glycero-D-manno-heptose 7-phosphate. The polypeptide is Phosphoheptose isomerase (Neisseria meningitidis serogroup C / serotype 2a (strain ATCC 700532 / DSM 15464 / FAM18)).